Here is a 403-residue protein sequence, read N- to C-terminus: TBC1 domain family member 20 (403 aa).

Residues 1–29 (MALRSARGDGPTSGRWDGGAEKGDFNAKR) form a disordered region. Residues 18–27 (GGAEKGDFNA) are compositionally biased toward basic and acidic residues. The Rab-GAP TBC domain maps to 60 to 246 (LLTDEIRRKV…RLYDFFLACH (187 aa)). 2 helical membrane-spanning segments follow: residues 238–258 (LYDF…AVIV) and 367–387 (FVKL…LAVV).

It is found in the membrane. Its function is as follows. GTPase-activating protein (GAP) specific for Rab1 and Rab2 small GTPase families for which it can accelerate the intrinsic GTP hydrolysis rate by more than five orders of magnitude. Also shows GAP activity for RAB18 GTPase. Promotes RAB18 dissociation from the endoplasmic reticulum (ER) membrane into the cytosol, probably through stimulating RAB18 GTP-hydrolysis. Involved in maintaining endoplasmic reticulum structure. This chain is TBC1 domain family member 20 (TBC1D20), found in Bos taurus (Bovine).